The chain runs to 154 residues: Large ribosomal subunit protein uL13 (154 aa).

The protein belongs to the universal ribosomal protein uL13 family. In terms of assembly, part of the 50S ribosomal subunit.

In terms of biological role, this protein is one of the early assembly proteins of the 50S ribosomal subunit, although it is not seen to bind rRNA by itself. It is important during the early stages of 50S assembly. This is Large ribosomal subunit protein uL13 from Borrelia garinii subsp. bavariensis (strain ATCC BAA-2496 / DSM 23469 / PBi) (Borreliella bavariensis).